A 135-amino-acid polypeptide reads, in one-letter code: Agouti-signaling protein (135 aa).

The signal sequence occupies residues 1–22; the sequence is MNILRLLLATLLVCLCLLTAYS. An N-linked (GlcNAc...) asparagine glycan is attached at Asn39. The tract at residues 56 to 101 is disordered; sequence NKKSKKISRKEAEKKRSSKKKASMKNVAQPRRPRPPPPAPCVATRD. Cystine bridges form between Cys96–Cys111, Cys103–Cys117, Cys110–Cys128, Cys114–Cys135, and Cys119–Cys126. The region spanning 96 to 135 is the Agouti domain; it reads CVATRDSCKPPAPACCDPCASCQCRFFRSSCSCRVLNPTC.

The protein localises to the secreted. Its function is as follows. Involved in the regulation of melanogenesis. The binding of ASP to MC1R precludes alpha-MSH initiated signaling and thus blocks production of cAMP, leading to a down-regulation of eumelanogenesis (brown/black pigment) and thus increasing synthesis of pheomelanin (yellow/red pigment). The protein is Agouti-signaling protein (ASIP) of Felis catus (Cat).